A 502-amino-acid chain; its full sequence is ATP synthase subunit alpha (502 aa).

169–176 (GDRQTGKT) serves as a coordination point for ATP.

The protein belongs to the ATPase alpha/beta chains family. F-type ATPases have 2 components, CF(1) - the catalytic core - and CF(0) - the membrane proton channel. CF(1) has five subunits: alpha(3), beta(3), gamma(1), delta(1), epsilon(1). CF(0) has three main subunits: a(1), b(2) and c(9-12). The alpha and beta chains form an alternating ring which encloses part of the gamma chain. CF(1) is attached to CF(0) by a central stalk formed by the gamma and epsilon chains, while a peripheral stalk is formed by the delta and b chains.

It localises to the cell membrane. It catalyses the reaction ATP + H2O + 4 H(+)(in) = ADP + phosphate + 5 H(+)(out). In terms of biological role, produces ATP from ADP in the presence of a proton gradient across the membrane. The alpha chain is a regulatory subunit. This chain is ATP synthase subunit alpha, found in Staphylococcus aureus (strain Mu3 / ATCC 700698).